We begin with the raw amino-acid sequence, 569 residues long: Hexose transporter HXT8 (569 aa).

The tract at residues 1–38 is disordered; that stretch reads MTDRKTNLPEEPIFEEAEDDGCPSIENSSHLSVPTVEE. Topologically, residues 1-61 are cytoplasmic; sequence MTDRKTNLPE…EVVVPEKPAS (61 aa). A compositionally biased stretch (acidic residues) spans 12-21; it reads PIFEEAEDDG. Residues 62 to 82 traverse the membrane as a helical segment; that stretch reads AYATVSIMCLCMAFGGFMSGW. The Extracellular portion of the chain corresponds to 83–118; the sequence is DTGTISGFVNQTDFLRRFGNYSHSKNTYYLSNVRTG. 2 N-linked (GlcNAc...) asparagine glycosylation sites follow: asparagine 92 and asparagine 102. Residues 119–139 traverse the membrane as a helical segment; sequence LIVSIFNVGSAIGCLFLSKLG. Residues 140–145 are Cytoplasmic-facing; the sequence is DIYGRC. A helical membrane pass occupies residues 146–166; sequence MGLIIVIVVYMVGIVIQIASI. The Extracellular segment spans residues 167-176; it reads DKWYQYFIGR. Residues 177-197 traverse the membrane as a helical segment; that stretch reads IIAGIGAGSISVLAPMLISET. The Cytoplasmic segment spans residues 198–203; the sequence is APKHIR. Residues 204 to 224 form a helical membrane-spanning segment; the sequence is GTLLACWQLMVTFAIFLGYCT. Residues 225–238 lie on the Extracellular side of the membrane; sequence NYGTKTYSNSVQWR. Residues 239–259 traverse the membrane as a helical segment; the sequence is VPLGLCFAWAIIMIGGMTFVP. The Cytoplasmic segment spans residues 260–342; sequence ESPRFLVQVG…INSLQQLTGD (83 aa). The helical transmembrane segment at 343–359 threads the bilayer; that stretch reads NYFFYYGTTIFKSVGMN. The Extracellular portion of the chain corresponds to 360–365; sequence DSFETS. The chain crosses the membrane as a helical span at residues 366–383; it reads IVLGIVNFASCFFSLYSV. Over 384-390 the chain is Cytoplasmic; the sequence is DKLGRRR. A helical transmembrane segment spans residues 391–411; sequence CLLLGAATMTACMVIYASVGV. At 412–433 the chain is on the extracellular side; sequence TRLYPNGKSEPSSKGAGNCTIV. An N-linked (GlcNAc...) asparagine glycan is attached at asparagine 429. A helical transmembrane segment spans residues 434 to 454; sequence FTCFYIFCFSCTWGPVCYVII. The Cytoplasmic portion of the chain corresponds to 455–471; sequence SETFPLRVRSKCMSVAT. A helical membrane pass occupies residues 472-492; that stretch reads AANLLWGFLIGFFTPFITSAI. A topological domain (extracellular) is located at residue asparagine 493. A helical transmembrane segment spans residues 494–514; sequence FYYGYVFMGCLAFSYFYVFFF. The Cytoplasmic segment spans residues 515–569; it reads VPETKGLTLEEVDEMWMDGVLPWKSESWVPASRRDGDYDNEKLQHDEKPFYKRMF.

It belongs to the major facilitator superfamily. Sugar transporter (TC 2.A.1.1) family.

The protein localises to the membrane. Functionally, probable glucose transporter. In Saccharomyces cerevisiae (strain ATCC 204508 / S288c) (Baker's yeast), this protein is Hexose transporter HXT8 (HXT8).